Reading from the N-terminus, the 290-residue chain is MEWSLTQSKLLAFHRLMRTDKPIGALLLLWPTLWALWVATPGMPQLWILAVFVAGVWLMRAAGCVVNDYADRKFDGHVKRTVNRPLPSGAVTEKEARNLFVVLVLLAFLLVLTLNAMTILLSVAALALAWVYPFMKRYTHLPQVVLGAAFGWSIPMAFAAVSESLPLSCWLMFLANILWAVAYDTQYAMVDRDDDIKIGIKSTAILFGRYDTLIIGILQLGVMALMALIGWLNGLGGGYYWAVLVAGALFVYQQKLIANREREACFKAFMNNNYVGLVLFLGLAMSYWHF.

Transmembrane regions (helical) follow at residues 23-43, 46-66, 99-119, 141-161, 163-183, 212-232, 233-253, and 268-288; these read IGAL…TPGM, LWIL…GCVV, LFVV…AMTI, LPQV…FAAV, ESLP…AVAY, TLII…IGWL, NGLG…FVYQ, and AFMN…MSYW.

This sequence belongs to the UbiA prenyltransferase family. Requires Mg(2+) as cofactor.

The protein localises to the cell inner membrane. It catalyses the reaction all-trans-octaprenyl diphosphate + 4-hydroxybenzoate = 4-hydroxy-3-(all-trans-octaprenyl)benzoate + diphosphate. It participates in cofactor biosynthesis; ubiquinone biosynthesis. In terms of biological role, catalyzes the prenylation of para-hydroxybenzoate (PHB) with an all-trans polyprenyl group. Mediates the second step in the final reaction sequence of ubiquinone-8 (UQ-8) biosynthesis, which is the condensation of the polyisoprenoid side chain with PHB, generating the first membrane-bound Q intermediate 3-octaprenyl-4-hydroxybenzoate. This is 4-hydroxybenzoate octaprenyltransferase from Salmonella paratyphi C (strain RKS4594).